A 1193-amino-acid polypeptide reads, in one-letter code: Chloride channel protein 2 (1193 aa).

Residues 1-168 (MVYFGDRQRD…WIWRHTVARL (168 aa)) lie on the Cytoplasmic side of the membrane. Residues 76–97 (SHAFYPCPPPAENARDSDSSDD) form a disordered region. Helical transmembrane passes span 169–204 (GEDW…IWLY) and 213–236 (VQYI…VHLI). Residues 242–246 (GSGIP) carry the Selectivity filter part_1 motif. Residue Ser-243 coordinates chloride. The segment at residues 245–252 (IPEMKTIL) is an intramembrane region (helical). A run of 2 helical transmembrane segments spans residues 261 to 279 (LTFK…TLGS) and 286 to 304 (EGPF…SKLV). Residues 284 to 288 (GKEGP) carry the Selectivity filter part_2 motif. Intramembrane regions (helical) lie at residues 320–332 (MLAA…VGAC) and 336–344 (PVGGVLFSI). 5 helical membrane passes run 356-373 (YWRG…FRLL), 402-430 (LFVF…VLFM), 439-458 (FLQK…VSSI), 511-530 (FGNL…IAST), and 536-555 (GMFI…VGEF). The Selectivity filter part_3 signature appears at 536–540 (GMFIP). Residue Phe-538 coordinates chloride. The segment at residues 576-590 (GGYAVVGAAAFSGSV) is an intramembrane region (helical). The note=Loop between two helices intramembrane region spans 591–592 (TH). Positions 593–604 (TVSVAVIIFEMT) form an intramembrane region, helical. An intramembrane region (note=Loop between two helices) is located at residues 605–609 (GQITH). A helical transmembrane segment spans residues 610–626 (VVPVMIAVLVANAVAAL). Residues 627-1193 (LQPSIYDSII…KSNTENGNHA (567 aa)) are Cytoplasmic-facing. Chloride is bound at residue Tyr-632. One can recognise a CBS 1 domain in the interval 663-723 (MVRDVKYIWH…KMIEKHIGRE (61 aa)). Disordered regions lie at residues 848–884 (TLQD…VSKK), 1103–1122 (NSFV…AVEK), and 1159–1193 (IKHT…GNHA). A CBS 2 domain is found at 1048–1105 (IDPSPFQLVERTSILKVHSLFSMVGINHAYVTKIGRLVGVVGLKELRKAIEDINSNSF). Polar residues predominate over residues 1165–1193 (GTVSLTMPPQESKQSPSADKSNTENGNHA).

Belongs to the chloride channel (TC 2.A.49) family. In terms of tissue distribution, at embryonic stages 13-16, expressed in a subset of the midline cells of the midline primordium and in all of the midline glia. Expressed along the Z-line of the sarcomere in larval longitudinal muscles.

It localises to the membrane. Voltage-gated chloride channel. Chloride channels have several functions including the regulation of cell volume; membrane potential stabilization, signal transduction and transepithelial transport. This Drosophila melanogaster (Fruit fly) protein is Chloride channel protein 2 (ClC-a).